The following is a 248-amino-acid chain: Pulmonary surfactant-associated protein A (248 aa).

Residues 1–20 (MLLCSLTLTLLWMVASGLEC) form the signal peptide. The Collagen-like domain maps to 28–100 (GSPGIPGTPG…PGERGPPGFP (73 aa)). A disordered region spans residues 29–102 (SPGIPGTPGS…ERGPPGFPAY (74 aa)). 9 positions are modified to 4-hydroxyproline: P30, P33, P36, P42, P54, P57, P63, P67, and P70. Positions 42–51 (PGRDGRDGIK) are enriched in basic and acidic residues. Pro residues predominate over residues 54–65 (PGPPGPMGPPGG). Positions 69–82 (LPGRDGMTGAPGLP) are enriched in low complexity. A compositionally biased stretch (basic and acidic residues) spans 84–93 (ERGEKGEPGE). Positions 132-248 (LAVGEKVFST…LQYRLAICEF (117 aa)) constitute a C-type lectin domain. Disulfide bonds link C155–C246 and C224–C238. The N-linked (GlcNAc...) asparagine glycan is linked to N207. Ca(2+)-binding residues include E215, R217, N234, and D235.

Belongs to the SFTPA family. Oligomeric complex of 6 set of homotrimers.

It localises to the secreted. It is found in the extracellular space. Its subcellular location is the extracellular matrix. The protein localises to the surface film. In terms of biological role, in presence of calcium ions, it binds to surfactant phospholipids and contributes to lower the surface tension at the air-liquid interface in the alveoli of the mammalian lung and is essential for normal respiration. Enhances the expression of MYO18A/SP-R210 on alveolar macrophages. This chain is Pulmonary surfactant-associated protein A (SFTPA1), found in Bos taurus (Bovine).